A 376-amino-acid polypeptide reads, in one-letter code: MSLASLSVSPGKGRRVVVGMSGGVDSSVTAWLLKQQGYEVIGLFMKNWEDDDDSEYCSTRQDLLDAASVADLVGVDFEYVNFAAEYKDRVFAEFLREYSAGRTPNPDVLCNAEIKFKAFLDHAMTLGAEHIATGHYARVRAIAGAHGREYQLLKALDGSKDQSYFLHRLNQAQLSRTLFPLGEIHKTEVRRIAHDIGLHNAAKKDSTGICFIGERPFREFLNRYLPTEPGDILTPQGQRVGRHHGLSFYTLGQRKGLGVGGVKGSQRDDGTADAWYVARKDLQHNILYVVQGHDHPWLLSNRLQALDASWVAGRAPELRGYGAKTRYRQADAACVLEQASQGAFELSFSQPQWAVTPGQSAVLYDGDVCLGGGIIA.

ATP is bound by residues 19 to 26 and Met45; that span reads GMSGGVDS. The interaction with target base in tRNA stretch occupies residues 105 to 107; that stretch reads NPD. The active-site Nucleophile is the Cys110. Cys110 and Cys210 are disulfide-bonded. Gly134 provides a ligand contact to ATP. The tract at residues 160–162 is interaction with tRNA; sequence KDQ. The Cysteine persulfide intermediate role is filled by Cys210. The tract at residues 326–327 is interaction with tRNA; that stretch reads RY.

The protein belongs to the MnmA/TRMU family.

It localises to the cytoplasm. It catalyses the reaction S-sulfanyl-L-cysteinyl-[protein] + uridine(34) in tRNA + AH2 + ATP = 2-thiouridine(34) in tRNA + L-cysteinyl-[protein] + A + AMP + diphosphate + H(+). Its function is as follows. Catalyzes the 2-thiolation of uridine at the wobble position (U34) of tRNA, leading to the formation of s(2)U34. This is tRNA-specific 2-thiouridylase MnmA from Bordetella petrii (strain ATCC BAA-461 / DSM 12804 / CCUG 43448).